A 726-amino-acid chain; its full sequence is Beta-adducin (726 aa).

The interval 1–25 (MSEETVPEAASPPPPQGQPYFDRFS) is disordered. A phosphoserine mark is found at S11 and S25. A Phosphothreonine; by PKA modification is found at T55. S60 and S344 each carry phosphoserine. An interaction with calmodulin region spans residues 425 to 444 (KQQKEKTRWLNTPNTYLRVN). Residues 525–726 (AEKSRSPSTE…KSKKKEKVES (202 aa)) are disordered. Residues S530 and S532 each carry the phosphoserine modification. Phosphothreonine is present on T533. Position 535 is a phosphoserine (S535). Over residues 566–586 (EEYKKEVERKKLELDGEKETA) the composition is skewed to basic and acidic residues. Residues 588–606 (EEPGSPAKSAPASPVQSPA) show a composition bias toward low complexity. Residues S592, S596, S600, and S604 each carry the phosphoserine modification. Phosphothreonine is present on T611. Phosphoserine occurs at positions 613, 617, 619, and 621. The span at 621–631 (SLEEGTKKTET) shows a compositional bias: basic and acidic residues. Positions 632 to 645 (SKAATTEPETTQPE) are enriched in low complexity. Residues 665–674 (GLSQMTTSAD) are compositionally biased toward polar residues. T675 bears the Phosphothreonine mark. Phosphoserine is present on residues S686, S689, S693, S697, S699, and S701. The segment covering 689–701 (SGPMSPEGSPSKS) has biased composition (low complexity). Residues 702 to 726 (PSKKKKKFRTPSFLKKSKKKEKVES) show a composition bias toward basic residues. At S703 the chain carries Phosphoserine; by PKC. The segment at 704-721 (KKKKKFRTPSFLKKSKKK) is interaction with calmodulin. S713 bears the Phosphoserine; by PKA and PKC mark.

It belongs to the aldolase class II family. Adducin subfamily. As to quaternary structure, heterodimer of an alpha and a beta subunit. Found in a complex with ADD2, DMTN and SLC2A1. Interacts with SLC2A1. Post-translationally, the N-terminus is blocked. Expressed mainly in brain, spleen, kidney cortex and medulla, and heart. Also expressed in human umbilical vein endothelial cells, human vascular smooth muscle cells, kidney tubular cells and K-562 cell line.

It is found in the cytoplasm. It localises to the cytoskeleton. The protein localises to the cell membrane. In terms of biological role, membrane-cytoskeleton-associated protein that promotes the assembly of the spectrin-actin network. Binds to the erythrocyte membrane receptor SLC2A1/GLUT1 and may therefore provide a link between the spectrin cytoskeleton to the plasma membrane. Binds to calmodulin. Calmodulin binds preferentially to the beta subunit. The sequence is that of Beta-adducin (ADD2) from Homo sapiens (Human).